The sequence spans 67 residues: Spiniferin (67 aa).

The N-terminal stretch at 1–23 is a signal peptide; it reads MKTQLAILLITLVLFQMFSQSDA. Leucine 36 bears the Leucine amide mark. A propeptide spanning residues 40 to 67 is cleaved from the precursor; it reads GLNDLSDLDELFDGEISKADLDFLREIM.

This sequence belongs to the non-disulfide-bridged peptide (NDBP) superfamily. Short antimicrobial peptide (group 4) family. Expressed by the venom gland.

It localises to the secreted. The protein resides in the target cell membrane. Functionally, alpha-helical and amphipathic peptide with weak antimicrobial activities against both Gram-positive (MIC=41 uM to &gt;82 uM) and Gram-negative (MIC&gt;82 uM) bacteria. It has extremely weak hemolytic activity against human erythrocytes. The protein is Spiniferin of Heterometrus spinifer (Asia giant forest scorpion).